An 81-amino-acid chain; its full sequence is Cytotoxin 1 (81 aa).

Residues 1–21 (MKTLLLTLVVVTIVCLDLGYT) form the signal peptide. 4 disulfides stabilise this stretch: Cys-24–Cys-42, Cys-35–Cys-59, Cys-63–Cys-74, and Cys-75–Cys-80.

This sequence belongs to the three-finger toxin family. Short-chain subfamily. Type IA cytotoxin sub-subfamily. As to quaternary structure, monomer in solution; Homodimer and oligomer in the presence of negatively charged lipids forming a pore with a size ranging between 20 and 30 Angstroms. As to expression, expressed by the venom gland.

The protein resides in the secreted. Its subcellular location is the target cell membrane. Its function is as follows. Basic protein that binds to cell membrane and depolarizes cardiomyocytes. It also shows lytic activities on many other cells, including red blood cells. Interaction with sulfatides in the cell membrane induces pore formation and cell internalization and is responsible for cytotoxicity in cardiomyocytes. It targets the mitochondrial membrane and induces mitochondrial swelling and fragmentation. It binds to the integrin alpha-V/beta-3 (ITGAV/ITGB3) with a moderate affinity and inhibits protein kinases C. It also binds with high affinity to heparin. It also causes skeletal muscle necrosis after intramuscular injection into mice. The sequence is that of Cytotoxin 1 from Naja atra (Chinese cobra).